The chain runs to 253 residues: DNA repair protein RecO (253 aa).

This sequence belongs to the RecO family.

Its function is as follows. Involved in DNA repair and RecF pathway recombination. In Streptococcus agalactiae serotype Ia (strain ATCC 27591 / A909 / CDC SS700), this protein is DNA repair protein RecO.